We begin with the raw amino-acid sequence, 514 residues long: M-phase inducer phosphatase 1 (514 aa).

The Phosphodegron motif lies at 73–83 (MGSSESTDSGF). Serine 75 bears the Phosphoserine; by CHEK1 mark. Serine 78, serine 81, and serine 87 each carry phosphoserine; by NEK11. A Phosphoserine modification is found at serine 106. Phosphoserine; by CHEK1 and CHEK2 is present on serine 123. Positions 140–142 (KEN) match the KEN box motif. Residue serine 172 is modified to Phosphoserine; by CHEK1. The disordered stretch occupies residues 256–308 (PCGSSTRAVLKRADRSHEEPPRGTKRRKSVPSPVKAKADVPEPAQLPSQSLSL). Residues 266 to 277 (KRADRSHEEPPR) are compositionally biased toward basic and acidic residues. Phosphoserine; by CHEK1 and CHEK2 occurs at positions 271 and 284. Position 311 is a phosphoserine (serine 311). Residues 366 to 472 (LIKEFVIIDC…FFLKCQSHCE (107 aa)) enclose the Rhodanese domain. Residue cysteine 421 is part of the active site. Threonine 497 is subject to Phosphothreonine; by CHEK1. A phosphoserine; by PLK3 mark is found at serine 503 and serine 509.

The protein belongs to the MPI phosphatase family. As to quaternary structure, interacts with CCNB1/cyclin B1. Interacts with YWHAE/14-3-3 epsilon when phosphorylated. Interacts with CUL1 specifically when CUL1 is neddylated and active. Interacts with BTRC/BTRCP1 and FBXW11/BTRCP2. Interactions with CUL1, BTRC and FBXW11 are enhanced upon DNA damage. Interacts with CHEK2; mediates CDC25A phosphorylation and degradation in response to infrared-induced DNA damages. Interacts with HSP90AB1; prevents heat shock-mediated CDC25A degradation and contributes to cell cycle progression. Post-translationally, phosphorylated by CHEK1 on Ser-75, Ser-123, Ser-172, Ser-271, Ser-284 and Thr-497 during checkpoint mediated cell cycle arrest. Also phosphorylated by CHEK2 on Ser-123, Ser-271, and Ser-284 during checkpoint mediated cell cycle arrest. Phosphorylation on Ser-172 and Thr-497 creates binding sites for YWHAE/14-3-3 epsilon which inhibits CDC25A. Phosphorylation on Ser-75, Ser-123, Ser-172, Ser-271 and Ser-284 may also promote ubiquitin-dependent proteolysis of CDC25A by the SCF complex. Phosphorylation of CDC25A at Ser-75 by CHEK1 primes it for subsequent phosphorylation at Ser-75, Ser-81 and Ser-87 by NEK11. Phosphorylation by NEK11 is required for BTRC-mediated polyubiquitination and degradation. Phosphorylation by PIM1 leads to an increase in phosphatase activity. Phosphorylated by PLK3 following DNA damage, leading to promote its ubiquitination and degradation. Ubiquitinated by the anaphase promoting complex/cyclosome (APC/C) ubiquitin ligase complex that contains FZR1/CDH1 during G1 phase leading to its degradation by the proteasome. Ubiquitinated by a SCF complex containing BTRC and FBXW11 during S phase leading to its degradation by the proteasome. Deubiquitination by USP17L2/DUB3 leads to its stabilization. In terms of tissue distribution, ubiquitously expressed in most developing tissue. High levels in the testis and lower levels in the ovary, particularly in germ cells. Lower levels also in kidney, liver, heart and muscle.

The enzyme catalyses O-phospho-L-tyrosyl-[protein] + H2O = L-tyrosyl-[protein] + phosphate. With respect to regulation, stimulated by B-type cyclins. Stimulated by PIM1-mediated phosphorylation. Functionally, tyrosine protein phosphatase which functions as a dosage-dependent inducer of mitotic progression. Directly dephosphorylates CDK1 and stimulates its kinase activity. Also dephosphorylates CDK2 in complex with cyclin-E, in vitro. The chain is M-phase inducer phosphatase 1 (Cdc25a) from Mus musculus (Mouse).